Reading from the N-terminus, the 264-residue chain is Small ribosomal subunit protein uS2 (264 aa).

This sequence belongs to the universal ribosomal protein uS2 family.

This is Small ribosomal subunit protein uS2 (rpsB) from Helicobacter pylori (strain ATCC 700392 / 26695) (Campylobacter pylori).